The primary structure comprises 336 residues: MVVKVGINGFGRIGRLAFRRIQNIEGVEVTRINDLTDPNMLAHLLKYDTTQGRFDGTVEVKEGGFEVNGNFIKVSAERDPENIDWATDGVEIVLEATGFFAKKEAAEKHLHANGAKKVVITAPGGNDVKTVVFNTNHDILDGTETVISGASCTTNCLAPMAKALHDAFGIQKGLMTTIHAYTGDQMILDGPHRGGDLRRARAGAANIVPNSTGAAKAIGLVIPELNGKLDGAAQRVPVPTGSVTELVVTLDKNVSVDEINAAMKAASNDSFGYTEDPIVSSDIVGVSYGSLFDATQTKVMEVDGSQLVKVVSWYDNEMSYTAQLVRTLEYFAKIAK.

Residues 12–13 (RI), Asp-34, Arg-78, and Thr-121 contribute to the NAD(+) site. D-glyceraldehyde 3-phosphate contacts are provided by residues 151–153 (SCT), Thr-182, Arg-199, 212–213 (TG), and Arg-235. Cys-152 (nucleophile) is an active-site residue. Position 316 (Asn-316) interacts with NAD(+).

Belongs to the glyceraldehyde-3-phosphate dehydrogenase family. In terms of assembly, homotetramer.

The protein localises to the cytoplasm. The catalysed reaction is D-glyceraldehyde 3-phosphate + phosphate + NAD(+) = (2R)-3-phospho-glyceroyl phosphate + NADH + H(+). Its pathway is carbohydrate degradation; glycolysis; pyruvate from D-glyceraldehyde 3-phosphate: step 1/5. Catalyzes the oxidative phosphorylation of glyceraldehyde 3-phosphate (G3P) to 1,3-bisphosphoglycerate (BPG) using the cofactor NAD. The first reaction step involves the formation of a hemiacetal intermediate between G3P and a cysteine residue, and this hemiacetal intermediate is then oxidized to a thioester, with concomitant reduction of NAD to NADH. The reduced NADH is then exchanged with the second NAD, and the thioester is attacked by a nucleophilic inorganic phosphate to produce BPG. This is Glyceraldehyde-3-phosphate dehydrogenase (gap) from Streptococcus pyogenes serotype M1.